The chain runs to 543 residues: Tyrosine-protein kinase Yes (543 aa).

Residues 1–20 (MGCIKSKENKSPAIKYRPEN) are compositionally biased toward basic and acidic residues. A disordered region spans residues 1–45 (MGCIKSKENKSPAIKYRPENTPEPVSTSVSHYGAEPTTVSPCPSS). The N-myristoyl glycine moiety is linked to residue Gly2. Residue Cys3 is the site of S-palmitoyl cysteine; in membrane form attachment. Thr21 bears the Phosphothreonine mark. Tyr32 carries the post-translational modification Phosphotyrosine. Ser40 bears the Phosphoserine mark. The SH3 domain occupies 91-152 (GGVTIFVALY…PSNYVAPADS (62 aa)). The SH2 domain occupies 158–255 (WYFGKMGRKD…GLCHKLTTVC (98 aa)). In terms of domain architecture, Protein kinase spans 277-530 (LRLEVKLGQG…YIQSFLEDYF (254 aa)). Residues 283–291 (LGQGCFGEV) and Lys305 contribute to the ATP site. Tyr336 and Tyr345 each carry phosphotyrosine. Residue Asp396 is the Proton acceptor of the active site. Tyr426 carries the post-translational modification Phosphotyrosine; by autocatalysis. Position 446 is a phosphotyrosine (Tyr446). Tyr537 carries the phosphotyrosine; by CSK modification.

It belongs to the protein kinase superfamily. Tyr protein kinase family. SRC subfamily. Interacts with YAP1 and CSF1R. Interacts with CTNND1; this interaction allows YES1-mediated activation of FYN and FER and subsequent phosphorylation of CTNND1. Interacts with FASLG. Interacts with IL6ST/gp130. Interacts with SCRIB, when YES1 is in a closed conformation; the interaction facilitates YES1 autophosphorylation. In terms of processing, phosphorylated. Phosphorylation by CSK on the C-terminal tail maintains the enzyme in an inactive state. Autophosphorylation at Tyr-426 maintains enzyme activity by blocking CSK-mediated inhibition. Post-translationally, palmitoylation at Cys-3 promotes membrane localization. Expressed in the epithelial cells of renal proximal tubules and stomach as well as hematopoietic cells in the bone marrow and spleen in the fetal tissues. In adult, expressed in epithelial cells of the renal proximal tubules and present in keratinocytes in the basal epidermal layer of epidermis.

The protein resides in the cell membrane. It localises to the cytoplasm. The protein localises to the cytoskeleton. It is found in the microtubule organizing center. Its subcellular location is the centrosome. The protein resides in the cytosol. It localises to the cell junction. It carries out the reaction L-tyrosyl-[protein] + ATP = O-phospho-L-tyrosyl-[protein] + ADP + H(+). In terms of biological role, non-receptor protein tyrosine kinase that is involved in the regulation of cell growth and survival, apoptosis, cell-cell adhesion, cytoskeleton remodeling, and differentiation. Stimulation by receptor tyrosine kinases (RTKs) including EGFR, PDGFR, CSF1R and FGFR leads to recruitment of YES1 to the phosphorylated receptor, and activation and phosphorylation of downstream substrates. Upon EGFR activation, promotes the phosphorylation of PARD3 to favor epithelial tight junction assembly. Participates in the phosphorylation of specific junctional components such as CTNND1 by stimulating the FYN and FER tyrosine kinases at cell-cell contacts. Upon T-cell stimulation by CXCL12, phosphorylates collapsin response mediator protein 2/DPYSL2 and induces T-cell migration. Participates in CD95L/FASLG signaling pathway and mediates AKT-mediated cell migration. Plays a role in cell cycle progression by phosphorylating the cyclin-dependent kinase 4/CDK4 thus regulating the G1 phase. Also involved in G2/M progression and cytokinesis. Catalyzes phosphorylation of organic cation transporter OCT2 which induces its transport activity. This chain is Tyrosine-protein kinase Yes (YES1), found in Homo sapiens (Human).